The following is a 542-amino-acid chain: Tubby-related protein 1 (542 aa).

Residues Met1–Asp289 are disordered. The segment covering Phe91–Glu104 has biased composition (basic and acidic residues). Acidic residues predominate over residues Ala114–Ala132. Over residues Pro146–Glu157 the composition is skewed to basic and acidic residues. The segment covering Ser262 to Lys275 has biased composition (basic residues).

It belongs to the TUB family. Homodimer. May interact with ABCF1, PSIP1, ZEB1 and HMGB2 (Potential). Interacts with DNM1. Interacts with F-actin. Interacts with TUB. Interacts with TYRO3. Retina-specific.

Its subcellular location is the cytoplasm. It localises to the cell membrane. The protein resides in the secreted. The protein localises to the synapse. In terms of biological role, required for normal development of photoreceptor synapses. Required for normal photoreceptor function and for long-term survival of photoreceptor cells. Interacts with cytoskeleton proteins and may play a role in protein transport in photoreceptor cells. Binds lipids, especially phosphatidylinositol 3-phosphate, phosphatidylinositol 4-phosphate, phosphatidylinositol 5-phosphate, phosphatidylinositol 3,4-bisphosphate, phosphatidylinositol 4,5-bisphosphate, phosphatidylinositol 3,4,5-bisphosphate, phosphatidylserine and phosphatidic acid (in vitro). Contribute to stimulation of phagocytosis of apoptotic retinal pigment epithelium (RPE) cells and macrophages. This is Tubby-related protein 1 (TULP1) from Homo sapiens (Human).